A 503-amino-acid polypeptide reads, in one-letter code: Cytochrome P450 11B1, mitochondrial (503 aa).

The transit peptide at M1–L24 directs the protein to the mitochondrion. C450 serves as a coordination point for heme.

Belongs to the cytochrome P450 family. Requires heme as cofactor.

The protein resides in the mitochondrion inner membrane. It carries out the reaction a steroid + 2 reduced [adrenodoxin] + O2 + 2 H(+) = an 11beta-hydroxysteroid + 2 oxidized [adrenodoxin] + H2O. The enzyme catalyses 11-deoxycortisol + 2 reduced [adrenodoxin] + O2 + 2 H(+) = cortisol + 2 oxidized [adrenodoxin] + H2O. The catalysed reaction is 21-hydroxyprogesterone + 2 reduced [adrenodoxin] + O2 + 2 H(+) = corticosterone + 2 oxidized [adrenodoxin] + H2O. It catalyses the reaction corticosterone + 2 reduced [adrenodoxin] + O2 + 2 H(+) = 18-hydroxycorticosterone + 2 oxidized [adrenodoxin] + H2O. It carries out the reaction 18-hydroxycorticosterone + 2 reduced [adrenodoxin] + O2 + 2 H(+) = aldosterone + 2 oxidized [adrenodoxin] + 2 H2O. The enzyme catalyses 21-hydroxyprogesterone + 2 reduced [adrenodoxin] + O2 + 2 H(+) = 19-hydroxy-11-deoxycorticosterone + 2 oxidized [adrenodoxin] + H2O. The catalysed reaction is 19-hydroxy-11-deoxycorticosterone + 2 reduced [adrenodoxin] + O2 + 2 H(+) = 19-oxo-11-deoxycorticosterone + 2 oxidized [adrenodoxin] + 2 H2O. Its pathway is steroid biosynthesis; glucocorticoid biosynthesis. The protein operates within steroid hormone biosynthesis. A cytochrome P450 monooxygenase that catalyzes the biosynthesis of aldosterone and other adrenal corticoids. Differing from other species (such as human, rat and mice), it is able to catalyze three sequential oxidative reactions of 11-deoxycorticosterone (21-hydroxyprogesterone), namely 11-beta hydroxylation, followed by two successive oxidations at C18 yielding 18-hydroxy and then 18-oxo intermediates, and ending with the formation of aldosterone. Steroid 11beta, 18- and 19-hydroxylase. Mechanistically, uses molecular oxygen inserting one oxygen atom into a substrate and reducing the second into a water molecule. Two electrons are provided by NADPH via a two-protein mitochondrial transfer system comprising flavoprotein FDXR (adrenodoxin/ferredoxin reductase) and nonheme iron-sulfur protein FDX1 or FDX2 (adrenodoxin/ferredoxin). The protein is Cytochrome P450 11B1, mitochondrial (CYP11B1) of Sus scrofa (Pig).